Consider the following 213-residue polypeptide: Ferric nitrobindin-like protein (213 aa).

Residues 17-42 are disordered; that stretch reads VNLAAEQSKSTSDKNLPEFGDMPIPD. The GXWXGXG signature appears at 65-71; sequence GVWRGQG.

This sequence belongs to the nitrobindin family.

The chain is Ferric nitrobindin-like protein from Corynebacterium jeikeium (strain K411).